Reading from the N-terminus, the 229-residue chain is Ras-like protein rasV (229 aa).

40–47 (GDGGVGKT) provides a ligand contact to GTP. The short motif at 62 to 70 (YDPTIEDSY) is the Effector region element. GTP is bound by residues 87 to 91 (DTAGQ) and 146 to 149 (NKSD). A Cysteine methyl ester modification is found at Cys-226. Cys-226 is lipidated: S-geranylgeranyl cysteine. The propeptide at 227–229 (KVM) is removed in mature form.

This sequence belongs to the small GTPase superfamily. Ras family.

It localises to the cell membrane. The enzyme catalyses GTP + H2O = GDP + phosphate + H(+). Ras proteins bind GDP/GTP and possess intrinsic GTPase activity. The protein is Ras-like protein rasV (rasV) of Dictyostelium discoideum (Social amoeba).